A 446-amino-acid chain; its full sequence is Homocitrate synthase, mitochondrial (446 aa).

The span at 1 to 14 (MCATDNAPAANAAP) shows a compositional bias: low complexity. The interval 1–36 (MCATDNAPAANAAPEKPSNVGVEVGHTGEQTNPYGA) is disordered. The 260-residue stretch at 48–307 (FQLIESTLRE…HKLRDLENLV (260 aa)) folds into the Pyruvate carboxyltransferase domain. A 2-oxoglutarate-binding site is contributed by Arg-56. Glu-57 is a binding site for Mg(2+). 3 residues coordinate 2-oxoglutarate: His-116, Arg-176, and Thr-210. Mg(2+)-binding residues include His-237 and His-239. His-334 (proton acceptor) is an active-site residue. Residues 422–446 (TPTVAATEGPAVEDEPAAKKAKTEE) are disordered. Over residues 437–446 (PAAKKAKTEE) the composition is skewed to basic and acidic residues.

The protein belongs to the alpha-IPM synthase/homocitrate synthase family. Homocitrate synthase LYS20/LYS21 subfamily. Mg(2+) is required as a cofactor. Requires Mn(2+) as cofactor.

It is found in the mitochondrion. The enzyme catalyses acetyl-CoA + 2-oxoglutarate + H2O = (2R)-homocitrate + CoA + H(+). It functions in the pathway amino-acid biosynthesis; L-lysine biosynthesis via AAA pathway; L-alpha-aminoadipate from 2-oxoglutarate: step 1/5. Catalyzes the aldol-type condensation of 2-oxoglutarate with acetyl-CoA to yield homocitrate. Carries out the first step of the alpha-aminoadipate (AAA) lysine biosynthesis pathway. The protein is Homocitrate synthase, mitochondrial (LYS1) of Yarrowia lipolytica (strain CLIB 122 / E 150) (Yeast).